A 274-amino-acid chain; its full sequence is NH(3)-dependent NAD(+) synthetase (274 aa).

Gly-46–Ser-53 contributes to the ATP binding site. Asp-52 is a Mg(2+) binding site. Arg-140 serves as a coordination point for deamido-NAD(+). Thr-160 lines the ATP pocket. Residue Glu-165 participates in Mg(2+) binding. Deamido-NAD(+)-binding residues include Lys-173 and Asp-180. ATP-binding residues include Lys-189 and Thr-211. His-260 to Lys-261 contacts deamido-NAD(+).

The protein belongs to the NAD synthetase family. As to quaternary structure, homodimer.

It carries out the reaction deamido-NAD(+) + NH4(+) + ATP = AMP + diphosphate + NAD(+) + H(+). The protein operates within cofactor biosynthesis; NAD(+) biosynthesis; NAD(+) from deamido-NAD(+) (ammonia route): step 1/1. In terms of biological role, catalyzes the ATP-dependent amidation of deamido-NAD to form NAD. Uses ammonia as a nitrogen source. The protein is NH(3)-dependent NAD(+) synthetase of Streptococcus gordonii (strain Challis / ATCC 35105 / BCRC 15272 / CH1 / DL1 / V288).